We begin with the raw amino-acid sequence, 456 residues long: Probable polygalacturonase At3g15720 (456 aa).

Positions 1 to 23 (MKKKTWFLNFSLFFLQIFTSSNA) are cleaved as a signal peptide. PbH1 repeat units lie at residues 169–195 (CNYVTISSLRINAPESSPNTDGIDVGA), 196–217 (SSNVVIQDCIIATGDDCIAINS), 219–239 (TSNIHISGIDCGPGHGISIGS), 249–270 (VENVCVQNCNFRGTMNGARIKT), 278–299 (ARMITFNGITLDNVENPIIIDQ), and 314–341 (SSAVEVSKVVFSNFIGTSKSEYGVDFRC). Asp-210 functions as the Proton donor in the catalytic mechanism. Residue His-233 is part of the active site.

The protein belongs to the glycosyl hydrolase 28 family.

The protein resides in the secreted. It is found in the cell wall. It carries out the reaction (1,4-alpha-D-galacturonosyl)n+m + H2O = (1,4-alpha-D-galacturonosyl)n + (1,4-alpha-D-galacturonosyl)m.. The polypeptide is Probable polygalacturonase At3g15720 (Arabidopsis thaliana (Mouse-ear cress)).